Here is a 396-residue protein sequence, read N- to C-terminus: Proton-coupled antiporter flippase LtaA (396 aa).

12 helical membrane-spanning segments follow: residues 15 to 34, 46 to 73, 80 to 99, 105 to 126, 138 to 159, 165 to 184, 211 to 231, 243 to 264, 276 to 298, 304 to 326, 338 to 358, and 370 to 390; these read FILM…MYIL, IAVA…GFLL, IVLT…VIWF, VIIF…IMLS, GYVY…NLLI, RFAF…YYFV, LLLF…VPIL, TIEY…MLFL, MYGV…SMIV, WIIA…TFMA, WGVF…FGGL, and FYFS…YFIA.

Belongs to the major facilitator superfamily. LtaA family.

The protein resides in the cell membrane. The protein operates within cell wall biogenesis; lipoteichoic acid biosynthesis. In terms of biological role, proton-coupled antiporter flippase that catalyzes the translocation, from the inner to the outer leaflet of the cell membrane, of the lipid-linked disaccharide (anchor-LLD) that anchors lipoteichoic acids (LTA) to the cell membrane. The sequence is that of Proton-coupled antiporter flippase LtaA (ltaA) from Staphylococcus aureus (strain MRSA252).